The following is a 1111-amino-acid chain: Lon protease homolog, mitochondrial (1111 aa).

The N-terminal 21 residues, 1–21 (MLRSSRSRLVTRNILLRQFKN), are a transit peptide targeting the mitochondrion. Disordered regions lie at residues 85 to 177 (IQLK…AKQP) and 288 to 311 (PPTS…ENNE). The span at 88-125 (KQDDKGKDIDQPESENRKKEEEQVPTEEKDNDTAKESE) shows a compositional bias: basic and acidic residues. The segment covering 126-135 (TSQQRDSVAE) has biased composition (polar residues). Over residues 145-167 (GASGNGESSGNGSGDDGNNGSGN) the composition is skewed to gly residues. In terms of domain architecture, Lon N-terminal spans 185-450 (VMALPISRRP…KALTVLKKEL (266 aa)). Residues 294–306 (NLKDESDVSKSEG) are compositionally biased toward basic and acidic residues. 602–609 (GPPGVGKT) serves as a coordination point for ATP. Basic and acidic residues-rich tracts occupy residues 819–835 (ENEE…KQSE) and 853–865 (ELIK…DNKG). Residues 819–866 (ENEEVKDQKDIKVKQSENKSSAEASTVESTTEENELIKTQKSHDNKGS) are disordered. Residues 899–1085 (STPPGVVMGL…EDVFQRLFGD (187 aa)) enclose the Lon proteolytic domain. Active-site residues include Ser-991 and Lys-1034.

This sequence belongs to the peptidase S16 family. In terms of assembly, homohexamer or homoheptamer. Organized in a ring with a central cavity.

The protein localises to the mitochondrion matrix. It carries out the reaction Hydrolysis of proteins in presence of ATP.. In terms of biological role, ATP-dependent serine protease that mediates the selective degradation of misfolded, unassembled or oxidatively damaged polypeptides as well as certain short-lived regulatory proteins in the mitochondrial matrix. May also have a chaperone function in the assembly of inner membrane protein complexes. Participates in the regulation of mitochondrial gene expression and in the maintenance of the integrity of the mitochondrial genome. Binds to mitochondrial DNA in a site-specific manner. The sequence is that of Lon protease homolog, mitochondrial from Kluyveromyces lactis (strain ATCC 8585 / CBS 2359 / DSM 70799 / NBRC 1267 / NRRL Y-1140 / WM37) (Yeast).